The chain runs to 217 residues: Small ribosomal subunit protein uS3c (217 aa).

The 72-residue stretch at 46 to 117 folds into the KH type-2 domain; that stretch reads VQKHIKNSSN…RLRMTLIEIA (72 aa).

The protein belongs to the universal ribosomal protein uS3 family. Part of the 30S ribosomal subunit.

Its subcellular location is the plastid. The protein localises to the chloroplast. The protein is Small ribosomal subunit protein uS3c (rps3) of Marchantia polymorpha (Common liverwort).